The chain runs to 413 residues: Paxillin homolog 1 (413 aa).

A compositionally biased stretch (basic and acidic residues) spans H33–F45. The disordered stretch occupies residues H33 to T157. Over residues Y49–P69 the composition is skewed to polar residues. Over residues R73 to S92 the composition is skewed to basic and acidic residues. Over residues A118–S143 the composition is skewed to polar residues. LIM zinc-binding domains are found at residues G174 to S232, P233 to P292, K293 to G350, and S351 to L410.

It belongs to the paxillin family. In terms of tissue distribution, isoform a: Expressed in all 95 body wall muscle cells as well as in the pharyngeal muscle cells (at protein level). Isoform c: Expressed in the body wall muscle cells and in the pharyngeal muscle cells.

It is found in the cell junction. It localises to the adherens junction. Its subcellular location is the cell membrane. The protein localises to the cytoplasm. The protein resides in the myofibril. It is found in the sarcomere. It localises to the m line. Its subcellular location is the cell projection. The protein localises to the podosome. Functionally, required for myofilament organization of the pharyngeal sarcomeres and for pharyngeal muscle contractions and hence for pharyngeal pumping. Together with lin-8, might be required for myofilament organization in the body wall muscles. This Caenorhabditis elegans protein is Paxillin homolog 1 (pxl-1).